The chain runs to 493 residues: Geraniol 8-hydroxylase (493 aa).

The Lumenal portion of the chain corresponds to methionine 1–isoleucine 6. Residues isoleucine 7–leucine 23 form a helical membrane-spanning segment. At serine 24 to leucine 493 the chain is on the cytoplasmic side. Position 436 (cysteine 436) interacts with heme.

Belongs to the cytochrome P450 family. Requires heme as cofactor. Expressed in roots, stems, leaves and flower buds. Hardly detected in mature flowers and fruits. Expressed in the internal phloem-associated parenchyma.

The protein resides in the endoplasmic reticulum membrane. It carries out the reaction (2E)-geraniol + reduced [NADPH--hemoprotein reductase] + O2 = (6E)-8-hydroxygeraniol + oxidized [NADPH--hemoprotein reductase] + H2O + H(+). Functionally, hydroxylase involved in the biosynthesis of hydroxygeraniol, a precursor of the terpenoid indole alkaloids such as vinblastine and vincristine. Also able to hydroxylate in vitro nerol and to catalyze 3'-hydroxylation of the flavanone naringenin to form eriodictyol. No activity with apigenin, kaempferol, p-coumaric acid and ferulic acid as substrates. The chain is Geraniol 8-hydroxylase (CYP76B6) from Catharanthus roseus (Madagascar periwinkle).